A 286-amino-acid chain; its full sequence is tRNA (guanine-N(7)-)-methyltransferase (286 aa).

A phosphoserine mark is found at Ser7 and Ser59. S-adenosyl-L-methionine is bound by residues Gly103, 126-127, 161-162, and Cys181; these read EI and NA. Asp184 is an active-site residue. 259–261 serves as a coordination point for S-adenosyl-L-methionine; the sequence is TEE.

This sequence belongs to the class I-like SAM-binding methyltransferase superfamily. TrmB family. As to quaternary structure, forms a complex with TRM82.

It is found in the nucleus. The enzyme catalyses guanosine(46) in tRNA + S-adenosyl-L-methionine = N(7)-methylguanosine(46) in tRNA + S-adenosyl-L-homocysteine. It participates in tRNA modification; N(7)-methylguanine-tRNA biosynthesis. Functionally, methyltransferase that catalyzes the formation of N(7)-methylguanine at position 46 (m7G46) in tRNA, a modification required to maintain stability of tRNAs; its absence resulting in tRNA decay. Both the D-stem and T-stem structures of tRNAs are required for efficient methyltransferase activity. The polypeptide is tRNA (guanine-N(7)-)-methyltransferase (Saccharomyces cerevisiae (strain RM11-1a) (Baker's yeast)).